Here is a 754-residue protein sequence, read N- to C-terminus: 5-methyltetrahydropteroyltriglutamate--homocysteine methyltransferase (754 aa).

Residues 17-20 and K117 each bind 5-methyltetrahydropteroyltri-L-glutamate; that span reads RELK. L-homocysteine is bound by residues 431 to 433 and E484; that span reads IGS. L-methionine-binding positions include 431 to 433 and E484; that span reads IGS. Residues 515 to 516 and W561 each bind 5-methyltetrahydropteroyltri-L-glutamate; that span reads RC. L-homocysteine is bound at residue D599. D599 serves as a coordination point for L-methionine. E605 is a 5-methyltetrahydropteroyltri-L-glutamate binding site. 3 residues coordinate Zn(2+): H641, C643, and E665. The active-site Proton donor is H694. C726 is a Zn(2+) binding site.

It belongs to the vitamin-B12 independent methionine synthase family. Requires Zn(2+) as cofactor.

The enzyme catalyses 5-methyltetrahydropteroyltri-L-glutamate + L-homocysteine = tetrahydropteroyltri-L-glutamate + L-methionine. Its pathway is amino-acid biosynthesis; L-methionine biosynthesis via de novo pathway; L-methionine from L-homocysteine (MetE route): step 1/1. Its function is as follows. Catalyzes the transfer of a methyl group from 5-methyltetrahydrofolate to homocysteine resulting in methionine formation. This is 5-methyltetrahydropteroyltriglutamate--homocysteine methyltransferase from Salmonella typhi.